Consider the following 416-residue polypeptide: S-adenosylmethionine synthase (416 aa).

His16 provides a ligand contact to ATP. Asp18 serves as a coordination point for Mg(2+). Glu44 contacts K(+). Glu57 and Gln100 together coordinate L-methionine. The flexible loop stretch occupies residues 100 to 110; it reads QSPDIAQGVTQ. Residues 175-177, 251-252, Asp260, 266-267, Ala283, and Lys287 each bind ATP; these read DGK, KF, and RK. Asp260 provides a ligand contact to L-methionine. Residue Lys291 coordinates L-methionine.

Belongs to the AdoMet synthase family. Homotetramer; dimer of dimers. The cofactor is Mg(2+). K(+) is required as a cofactor.

The protein resides in the cytoplasm. The catalysed reaction is L-methionine + ATP + H2O = S-adenosyl-L-methionine + phosphate + diphosphate. It functions in the pathway amino-acid biosynthesis; S-adenosyl-L-methionine biosynthesis; S-adenosyl-L-methionine from L-methionine: step 1/1. In terms of biological role, catalyzes the formation of S-adenosylmethionine (AdoMet) from methionine and ATP. The overall synthetic reaction is composed of two sequential steps, AdoMet formation and the subsequent tripolyphosphate hydrolysis which occurs prior to release of AdoMet from the enzyme. This is S-adenosylmethionine synthase from Crocosphaera subtropica (strain ATCC 51142 / BH68) (Cyanothece sp. (strain ATCC 51142)).